Reading from the N-terminus, the 359-residue chain is Adenosine 3'-phospho 5'-phosphosulfate transporter 1 (359 aa).

The next 7 membrane-spanning stretches (helical) occupy residues 26 to 46 (NMKLALATGGIMGSFLLYGIL), 68 to 88 (STFLVLSNRVFAALMAIVIVL), 157 to 177 (YSIALTITTGCMIFFLTGKIS), 184 to 204 (TSYGIILMALYMFFDSFTSTF), 228 to 248 (SIISVFILILNGRLFPAIEFI), 254 to 276 (VFFDSTMLSASAGLGQMVIYYTI), and 300 to 320 (TLIYLHPLSNTQWIGALLVFG). The tract at residues 332-359 (KKHGGHSHGGSNAATTTTPSNNSNNTEK) is disordered. A compositionally biased stretch (low complexity) spans 340–359 (GGSNAATTTTPSNNSNNTEK).

The protein belongs to the nucleotide-sugar transporter family. SLC35B subfamily.

The protein localises to the golgi apparatus membrane. The enzyme catalyses 3'-phosphoadenylyl sulfate(in) + adenosine 3',5'-bisphosphate(out) = 3'-phosphoadenylyl sulfate(out) + adenosine 3',5'-bisphosphate(in). Probably functions as a 3'-phosphoadenylyl sulfate:adenosine 3',5'-bisphosphate antiporter at the Golgi membranes. Mediates the transport from the cytosol into the lumen of the Golgi of 3'-phosphoadenylyl sulfate/adenosine 3'-phospho 5'-phosphosulfate (PAPS), a universal sulfuryl donor for sulfation events that take place in that compartment. This is Adenosine 3'-phospho 5'-phosphosulfate transporter 1 (slc35b2) from Dictyostelium discoideum (Social amoeba).